The sequence spans 215 residues: MVSLEVRLRTPKGKREAKRLRRRGEVPAVVYGPATDPIPVKIKRSLLEKVFHTITETTPIRLVIKDDEERTVSEKTVFLKMIQRDKVSEAIVHVDFYEPVKGHRMRINVPLKVVGKPVGVEKGGFLEVYHEEIPVETDPDRVPQEIEVDVSSLDLGDVIHARDLKLPEGVKCLLEDEEAVVSILVPKEVSIEEEEVEEEVAEPEVIKRKEEEEEE.

The span at 192–202 shows a compositional bias: acidic residues; the sequence is EEEEVEEEVAE. A disordered region spans residues 192 to 215; that stretch reads EEEEVEEEVAEPEVIKRKEEEEEE. A compositionally biased stretch (basic and acidic residues) spans 204–215; it reads EVIKRKEEEEEE.

The protein belongs to the bacterial ribosomal protein bL25 family. CTC subfamily. Part of the 50S ribosomal subunit; part of the 5S rRNA/L5/L18/L25 subcomplex. Contacts the 5S rRNA. Binds to the 5S rRNA independently of L5 and L18.

In terms of biological role, this is one of the proteins that binds to the 5S RNA in the ribosome where it forms part of the central protuberance. The polypeptide is Large ribosomal subunit protein bL25 (Thermotoga neapolitana (strain ATCC 49049 / DSM 4359 / NBRC 107923 / NS-E)).